Reading from the N-terminus, the 625-residue chain is tRNA (uracil-5-)-methyltransferase homolog A (625 aa).

2 disordered regions span residues 1–37 (MSENLDNEGPKPMESCGQESSSALSCPTVSVPPAAPA) and 145–165 (RPKADPMARRRRQEGESEPPV). Positions 27-37 (PTVSVPPAAPA) are enriched in low complexity. In terms of domain architecture, RRM spans 73–146 (FKLELQNVPR…RPLSVRLARP (74 aa)). Residues 180-209 (YAEQLERKQLECEQVLQKLAKEIGSTNRAL) adopt a coiled-coil conformation. Ser-378 is modified (phosphoserine). S-adenosyl-L-methionine contacts are provided by Gln-411, Glu-461, and Asp-510. Cys-538 serves as the catalytic Nucleophile. Glu-581 functions as the Proton acceptor in the catalytic mechanism. Residues 594–625 (GTGVLGPHSPPAQPTPGPPDNTLQETGTFPSS) are disordered. A compositionally biased stretch (pro residues) spans 601–612 (HSPPAQPTPGPP). Position 602 is a phosphoserine (Ser-602). Positions 614–625 (NTLQETGTFPSS) are enriched in polar residues.

This sequence belongs to the class I-like SAM-binding methyltransferase superfamily. RNA M5U methyltransferase family.

It localises to the cytoplasm. The protein localises to the cytosol. The enzyme catalyses uridine(54) in tRNA + S-adenosyl-L-methionine = 5-methyluridine(54) in tRNA + S-adenosyl-L-homocysteine + H(+). The catalysed reaction is a uridine in mRNA + S-adenosyl-L-methionine = a 5-methyluridine in mRNA + S-adenosyl-L-homocysteine + H(+). Its function is as follows. S-adenosyl-L-methionine-dependent methyltransferase that catalyzes the formation of 5-methyl-uridine in tRNAs and some mRNAs. Mainly catalyzes the methylation of uridine at position 54 (m5U54) in cytosolic tRNAs. Also able to mediate the formation of 5-methyl-uridine in some mRNAs. The sequence is that of tRNA (uracil-5-)-methyltransferase homolog A from Homo sapiens (Human).